A 962-amino-acid polypeptide reads, in one-letter code: Phosphatidylinositol 3,4,5-trisphosphate 3-phosphatase and dual-specificity protein phosphatase daf-18 (962 aa).

A disordered region spans residues 1 to 37 (MVTPPPDVPSTSTRSMARDLQENPNRQPGEPRVSEPY). Residues 58–230 (CRTEYQNIDL…YYYHKLRERE (173 aa)) enclose the Phosphatase tensin-type domain. Catalysis depends on cysteine 169, which acts as the Phosphocysteine intermediate. In terms of domain architecture, C2 tensin-type spans 234–530 (LPLRMQLIGV…GMKLHVVLRC (297 aa)). Disordered regions lie at residues 382-416 (DTSI…WQIV) and 689-731 (IENT…RLPD). Basic and acidic residues predominate over residues 392–403 (RRNETPMRKIDP). Residues 692–704 (TGPSTSGSSAPGT) are compositionally biased toward low complexity. Over residues 706-720 (KKTEASQSDKVKPAT) the composition is skewed to basic and acidic residues.

Belongs to the PTEN phosphatase protein family. In terms of assembly, interacts (via C-terminus) with vab-1 (via kinase domain); the interaction is independent of vab-1 kinase activity. Interacts with arr-1 and mpz-1; the interaction may inhibit daf-18. Interacts (via C-terminus) with daf-2 (via kinase domain). Phosphorylated by vab-1 on tyrosine residues which may promote daf-18 degradation. Expressed in embryo, larvae and in adult germline (at protein level). Expressed at equal levels in the 6 vulva precursor cells (VPCs) of L2 larvae and in the descendant cells of the induced VPCs (at protein level). Expressed in the uterus (at protein level). Expressed in the Z2/Z3 germline precursors, oocytes, several amphid neurons and weakly in the nerve cord (at protein level).

The protein localises to the perikaryon. The protein resides in the cell membrane. Its subcellular location is the cell projection. It is found in the axon. It localises to the dendrite. The protein localises to the cytoplasm. The protein resides in the nucleus. The catalysed reaction is a 1,2-diacyl-sn-glycero-3-phospho-(1D-myo-inositol-3,4,5-trisphosphate) + H2O = a 1,2-diacyl-sn-glycero-3-phospho-(1D-myo-inositol-4,5-bisphosphate) + phosphate. It carries out the reaction O-phospho-L-seryl-[protein] + H2O = L-seryl-[protein] + phosphate. The enzyme catalyses O-phospho-L-threonyl-[protein] + H2O = L-threonyl-[protein] + phosphate. It catalyses the reaction O-phospho-L-tyrosyl-[protein] + H2O = L-tyrosyl-[protein] + phosphate. The catalysed reaction is 1,2-dioctanoyl-sn-glycero-3-phospho-(1D-myo-inositol-3,4,5-trisphosphate) + H2O = 1,2-dioctanoyl-sn-glycero-3-phospho-(1D-myo-inositol-4,5-bisphosphate) + phosphate. It carries out the reaction 1,2-dihexadecanoyl-sn-glycero-3-phospho-(1D-myo-inositol-3,4,5-trisphosphate) + H2O = 1,2-dihexadecanoyl-sn-glycero-3-phospho-(1D-myo-inositol-4,5-bisphosphate) + phosphate. Acts as a dual-specificity protein phosphatase, dephosphorylating tyrosine-, serine- and threonine-phosphorylated proteins. Also acts as a lipid phosphatase, removing the phosphate in the D3 position of the inositol ring from phosphatidylinositol 3,4,5-trisphosphate. By dephosphorylating PtdIns(3,4,5)P3 antagonizes PtdIns(3,4,5)P3 production by age-1/PI3K and thus, negatively regulates daf-2-mediated processes including dauer formation, longevity, fat metabolism, chemotaxis towards salt, thermotolerance and axon guidance. Similarly, promotes apoptosis during embryonic development by suppressing the recruitment of the prosurvival kinases akt-1/2 to the plasma membrane. In addition, regulates Z2/Z3 germline precursor cell cycle by maintaining them arrested at the G2 stage and by controlling their growth during L1 diapause. After sperm depletion in larvae and adult hermaphrodites, promotes germline stem cell quiescence and oocyte accumulation. By dephosphorylating ephrin-like receptor vab-1 on tyrosine residues, negatively regulates oocyte maturation downstream of vab-1 and upstream of mpk-1, independently of daf-2. Plays a role in postembryonic muscle arm extensions. Required for neurite outgrowth during AIY interneuron embryonic development. Mainly independently of daf-2, negatively regulates vulva induction probably by inhibiting mpk-1 phosphorylation. Both lipid and protein phosphatase activities are required for the regulation of vulva induction. Plays a role in gonad and germline development following the L1 diapause. This Caenorhabditis elegans protein is Phosphatidylinositol 3,4,5-trisphosphate 3-phosphatase and dual-specificity protein phosphatase daf-18.